A 253-amino-acid chain; its full sequence is Protein C1orf43 homolog (253 aa).

The chain crosses the membrane as a helical span at residues 11–31 (VNVVLVMAYGSLVFVLLFIFV). A disordered region spans residues 194 to 213 (SGSSQRQHQSAAKDLTQSPE).

It localises to the membrane. The protein resides in the golgi apparatus. It is found in the mitochondrion. In terms of biological role, general regulator of phagocytosis. Required to uptake Gram negative bacterium by macrophages. The protein is Protein C1orf43 homolog of Bos taurus (Bovine).